We begin with the raw amino-acid sequence, 130 residues long: Small ribosomal subunit protein uS8B (130 aa).

The protein belongs to the universal ribosomal protein uS8 family.

This chain is Small ribosomal subunit protein uS8B (RpS15Ab), found in Drosophila melanogaster (Fruit fly).